A 509-amino-acid chain; its full sequence is Photosystem II CP47 reaction center protein (509 aa).

Transmembrane regions (helical) follow at residues 21–36 (AVHLMHTALVAGWAGS), 101–115 (IVLSGMLFLAAIWHW), 140–156 (GIHLLLSSLLCFGFGAF), 203–218 (IAAGTVGILAGVFHLT), 237–252 (VLSSSISAVFFSAFVT), and 457–472 (NFALIFFFGHLWHGSR).

Belongs to the PsbB/PsbC family. PsbB subfamily. PSII is composed of 1 copy each of membrane proteins PsbA, PsbB, PsbC, PsbD, PsbE, PsbF, PsbH, PsbI, PsbJ, PsbK, PsbL, PsbM, PsbT, PsbX, PsbY, PsbZ, Psb30/Ycf12, at least 3 peripheral proteins of the oxygen-evolving complex and a large number of cofactors. It forms dimeric complexes. Requires Binds multiple chlorophylls. PSII binds additional chlorophylls, carotenoids and specific lipids. as cofactor.

It localises to the plastid. The protein localises to the chloroplast thylakoid membrane. Its function is as follows. One of the components of the core complex of photosystem II (PSII). It binds chlorophyll and helps catalyze the primary light-induced photochemical processes of PSII. PSII is a light-driven water:plastoquinone oxidoreductase, using light energy to abstract electrons from H(2)O, generating O(2) and a proton gradient subsequently used for ATP formation. This Pyropia yezoensis (Susabi-nori) protein is Photosystem II CP47 reaction center protein.